The chain runs to 484 residues: uncharacterized protein (484 aa).

The HTH gntR-type domain maps to 14-82; sequence VPLHRQIEQY…KGGGTKVVNS (69 aa). A DNA-binding region (H-T-H motif) is located at residues 42–61; sequence QRTLADMFQVNRSTVTAAID. At Lys327 the chain carries N6-(pyridoxal phosphate)lysine.

It in the C-terminal section; belongs to the class-I pyridoxal-phosphate-dependent aminotransferase family. Pyridoxal 5'-phosphate serves as cofactor.

This is an uncharacterized protein from Bacillus subtilis (strain 168).